The sequence spans 324 residues: Glyoxylate/hydroxypyruvate reductase B (324 aa).

Active-site residues include R237 and E266. The Proton donor role is filled by H285.

It belongs to the D-isomer specific 2-hydroxyacid dehydrogenase family. GhrB subfamily. As to quaternary structure, homodimer.

It localises to the cytoplasm. It carries out the reaction glycolate + NADP(+) = glyoxylate + NADPH + H(+). The catalysed reaction is (R)-glycerate + NAD(+) = 3-hydroxypyruvate + NADH + H(+). It catalyses the reaction (R)-glycerate + NADP(+) = 3-hydroxypyruvate + NADPH + H(+). Its function is as follows. Catalyzes the NADPH-dependent reduction of glyoxylate and hydroxypyruvate into glycolate and glycerate, respectively. The sequence is that of Glyoxylate/hydroxypyruvate reductase B from Shigella boydii serotype 18 (strain CDC 3083-94 / BS512).